We begin with the raw amino-acid sequence, 579 residues long: Pre-mRNA-processing factor 17 (579 aa).

The span at 1 to 19 (MSAAIAALAASYGSGSGSE) shows a compositional bias: low complexity. Disordered regions lie at residues 1–34 (MSAAIAALAASYGSGSGSESDSDSEGSRCPLPAA) and 204–237 (DVAKPSEEEQKELDEITAKRQKKGKQEEEKPGEE). 7 WD repeats span residues 286–326 (GHTK…RCLR), 330–369 (GHSKAVRDICFNTAGTQFLSAAYDRYLKLWDTETGQCISR), 371–413 (TNRK…IVQE), 416–455 (RHLGAVNTIVFVDENRRFVSTSDDKSLRVWEWDIPVDFKY), 459–498 (PSMHSMPAVTLSPNGKWLACQSMDNQILIFGAQNRFRLNK), 504–545 (GHMV…LYSR), and 548–578 (AHDKVCIGAVWHPHETSKVITCGWDGLIKLW).

As to quaternary structure, component of the catalytic spliceosome C complexes. Component of the postcatalytic spliceosome P complex. Interacts with PPIL1; this interaction leads to CDC40 isomerization. Undergoes isomerization of the peptide bond between Gly-94 and Pro-95. The reaction is catalyzed by PPIL1.

The protein localises to the nucleus. It is found in the nucleus speckle. Functionally, required for pre-mRNA splicing as component of the activated spliceosome. Plays an important role in embryonic brain development; this function does not require proline peptide bond isomerization. This Mus musculus (Mouse) protein is Pre-mRNA-processing factor 17 (Cdc40).